A 261-amino-acid chain; its full sequence is Leucine-rich repeat-containing protein 18 (261 aa).

LRR repeat units follow at residues 28–49 (GKKR…ILRL), 51–72 (DMDE…ISKF), 74–95 (NLRW…IGQM), 97–118 (SLLY…VELK), 122–144 (NIRA…GALK), 145–167 (ELHE…SKLP), and 168–189 (KLKK…EIFI).

The protein localises to the cytoplasm. May be involved in the regulation of spermatogenesis and sperm maturation. This chain is Leucine-rich repeat-containing protein 18 (LRRC18), found in Homo sapiens (Human).